The chain runs to 360 residues: Photosystem II protein D1 (360 aa).

Helical transmembrane passes span 29 to 46 (YIGWFGVLMIPTLLTATT), 118 to 133 (HFLLGVASYMGREWEL), and 142 to 156 (WIFVAFSAPVAAASA). His-118 provides a ligand contact to chlorophyll a. Residue Tyr-126 participates in pheophytin a binding. [CaMn4O5] cluster is bound by residues Asp-170 and Glu-189. The chain crosses the membrane as a helical span at residues 197–218 (FHMAGVAGVFGGSLFSAMHGSL). Chlorophyll a is bound at residue His-198. Residues His-215 and 264-265 (SF) each bind a quinone. Fe cation is bound at residue His-215. Residue His-272 coordinates Fe cation. The helical transmembrane segment at 274–288 (FLAAWPVVRIWLTAL) threads the bilayer. Residues His-332, Glu-333, Asp-342, and Ala-344 each coordinate [CaMn4O5] cluster. The propeptide occupies 345–360 (AGEVLPVAVSAPAVHA).

This sequence belongs to the reaction center PufL/M/PsbA/D family. PSII is composed of 1 copy each of membrane proteins PsbA, PsbB, PsbC, PsbD, PsbE, PsbF, PsbH, PsbI, PsbJ, PsbK, PsbL, PsbM, PsbT, PsbX, PsbY, PsbZ, Psb30/Ycf12, at least 3 peripheral proteins of the oxygen-evolving complex and a large number of cofactors. It forms dimeric complexes. The cofactor is The D1/D2 heterodimer binds P680, chlorophylls that are the primary electron donor of PSII, and subsequent electron acceptors. It shares a non-heme iron and each subunit binds pheophytin, quinone, additional chlorophylls, carotenoids and lipids. D1 provides most of the ligands for the Mn4-Ca-O5 cluster of the oxygen-evolving complex (OEC). There is also a Cl(-1) ion associated with D1 and D2, which is required for oxygen evolution. The PSII complex binds additional chlorophylls, carotenoids and specific lipids.. In terms of processing, tyr-161 forms a radical intermediate that is referred to as redox-active TyrZ, YZ or Y-Z. Post-translationally, C-terminally processed by CTPA; processing is essential to allow assembly of the oxygen-evolving complex and thus photosynthetic growth.

It is found in the plastid. The protein resides in the chloroplast thylakoid membrane. The catalysed reaction is 2 a plastoquinone + 4 hnu + 2 H2O = 2 a plastoquinol + O2. In terms of biological role, photosystem II (PSII) is a light-driven water:plastoquinone oxidoreductase that uses light energy to abstract electrons from H(2)O, generating O(2) and a proton gradient subsequently used for ATP formation. It consists of a core antenna complex that captures photons, and an electron transfer chain that converts photonic excitation into a charge separation. The D1/D2 (PsbA/PsbD) reaction center heterodimer binds P680, the primary electron donor of PSII as well as several subsequent electron acceptors. The chain is Photosystem II protein D1 from Bumilleriopsis filiformis (Yellow-green alga).